A 501-amino-acid chain; its full sequence is Probable cytosol aminopeptidase (501 aa).

Residues Lys272 and Asp277 each contribute to the Mn(2+) site. Lys284 is a catalytic residue. Asp295, Asp354, and Glu356 together coordinate Mn(2+). Arg358 is an active-site residue.

It belongs to the peptidase M17 family. Mn(2+) is required as a cofactor.

Its subcellular location is the cytoplasm. It carries out the reaction Release of an N-terminal amino acid, Xaa-|-Yaa-, in which Xaa is preferably Leu, but may be other amino acids including Pro although not Arg or Lys, and Yaa may be Pro. Amino acid amides and methyl esters are also readily hydrolyzed, but rates on arylamides are exceedingly low.. The catalysed reaction is Release of an N-terminal amino acid, preferentially leucine, but not glutamic or aspartic acids.. Functionally, presumably involved in the processing and regular turnover of intracellular proteins. Catalyzes the removal of unsubstituted N-terminal amino acids from various peptides. In Buchnera aphidicola subsp. Baizongia pistaciae (strain Bp), this protein is Probable cytosol aminopeptidase.